A 462-amino-acid chain; its full sequence is Chromosomal replication initiator protein DnaA (462 aa).

The tract at residues 1–84 is domain I, interacts with DnaA modulators; sequence MAVSLWQQCI…RFDIGSRPSA (84 aa). The segment at 84–125 is domain II; that stretch reads ARTVQPAPAAPRPTTGHTQTKARVGTAFNIQAEPMANANHRS. Positions 126 to 342 are domain III, AAA+ region; that stretch reads NINPTYQFDN…GALNRVIANA (217 aa). Residues Gly170, Gly172, Lys173, and Thr174 each contribute to the ATP site. A domain IV, binds dsDNA region spans residues 343–462; that stretch reads NFTGRPITID…YANLIRTLSS (120 aa).

Belongs to the DnaA family. Oligomerizes as a right-handed, spiral filament on DNA at oriC.

Its subcellular location is the cytoplasm. Plays an essential role in the initiation and regulation of chromosomal replication. ATP-DnaA binds to the origin of replication (oriC) to initiate formation of the DNA replication initiation complex once per cell cycle. Binds the DnaA box (a 9 base pair repeat at the origin) and separates the double-stranded (ds)DNA. Forms a right-handed helical filament on oriC DNA; dsDNA binds to the exterior of the filament while single-stranded (ss)DNA is stabiized in the filament's interior. The ATP-DnaA-oriC complex binds and stabilizes one strand of the AT-rich DNA unwinding element (DUE), permitting loading of DNA polymerase. After initiation quickly degrades to an ADP-DnaA complex that is not apt for DNA replication. Binds acidic phospholipids. This is Chromosomal replication initiator protein DnaA from Shewanella denitrificans (strain OS217 / ATCC BAA-1090 / DSM 15013).